Consider the following 575-residue polypeptide: Transcription factor collier (575 aa).

Residues 79 to 82 (RKSN) form an interaction with DNA region. The segment at 167-186 (CRVLLTHEVMCSRCCDKKSC) adopts a C5-type zinc-finger fold. 2 interaction with DNA regions span residues 213–220 (NCLKNAGN) and 252–255 (NNSK). The disordered stretch occupies residues 255–278 (KHGRRAKRLDTTEGTGNTSLSISG). Residues 266–276 (TEGTGNTSLSI) show a composition bias toward polar residues. The IPT/TIG domain occupies 299 to 382 (PCIKAISPSE…KGSPGRFVYV (84 aa)). 2 disordered regions span residues 456-492 (GQWT…GSYG) and 546-575 (AATA…AAAV). The segment covering 479-492 (SSASTPHSSGGSYG) has biased composition (low complexity). Residues 546–557 (AATAHPHHHYPH) are compositionally biased toward basic residues. Residues 561–575 (PWHNPAVSAATAAAV) show a composition bias toward low complexity.

The protein belongs to the COE family. As to expression, its expression at the blastoderm stage is restricted to a single stripe of cells corresponding to part of the intercalary and mandibular segment primordia, possibly parasegment O.

It is found in the nucleus. In terms of biological role, may act as a 'second-level regulator' of head patterning. Required for establishment of the PS(-1)/PS0 parasegmental border and formation of the intercalary segment. Required for expression of the segment polarity genes hedgehog, engrailed and wingless, and the segment-identity genes CAP and collar in the intercalary segment. Required at the onset of the gastrulation for the correct formation of the mandibular segment. The chain is Transcription factor collier (kn) from Drosophila melanogaster (Fruit fly).